The primary structure comprises 113 residues: Hydrogenase maturation factor HypA (113 aa).

Histidine 2 lines the Ni(2+) pocket. The Zn(2+) site is built by cysteine 73, cysteine 76, cysteine 89, and cysteine 92.

This sequence belongs to the HypA/HybF family.

Involved in the maturation of [NiFe] hydrogenases. Required for nickel insertion into the metal center of the hydrogenase. This Rhodobacter capsulatus (Rhodopseudomonas capsulata) protein is Hydrogenase maturation factor HypA.